A 115-amino-acid chain; its full sequence is Large ribosomal subunit protein uL22 (115 aa).

The protein belongs to the universal ribosomal protein uL22 family. In terms of assembly, part of the 50S ribosomal subunit.

In terms of biological role, this protein binds specifically to 23S rRNA; its binding is stimulated by other ribosomal proteins, e.g. L4, L17, and L20. It is important during the early stages of 50S assembly. It makes multiple contacts with different domains of the 23S rRNA in the assembled 50S subunit and ribosome. Its function is as follows. The globular domain of the protein is located near the polypeptide exit tunnel on the outside of the subunit, while an extended beta-hairpin is found that lines the wall of the exit tunnel in the center of the 70S ribosome. This Lactococcus lactis subsp. lactis (strain IL1403) (Streptococcus lactis) protein is Large ribosomal subunit protein uL22.